A 217-amino-acid chain; its full sequence is Probable transaldolase (217 aa).

Catalysis depends on K83, which acts as the Schiff-base intermediate with substrate.

Belongs to the transaldolase family. Type 3B subfamily.

It localises to the cytoplasm. It catalyses the reaction D-sedoheptulose 7-phosphate + D-glyceraldehyde 3-phosphate = D-erythrose 4-phosphate + beta-D-fructose 6-phosphate. It functions in the pathway carbohydrate degradation; pentose phosphate pathway; D-glyceraldehyde 3-phosphate and beta-D-fructose 6-phosphate from D-ribose 5-phosphate and D-xylulose 5-phosphate (non-oxidative stage): step 2/3. Functionally, transaldolase is important for the balance of metabolites in the pentose-phosphate pathway. In Clostridium botulinum (strain Loch Maree / Type A3), this protein is Probable transaldolase.